Here is a 593-residue protein sequence, read N- to C-terminus: Arginine--tRNA ligase (593 aa).

Positions 138–148 (ANPTGPLHVGH) match the 'HIGH' region motif.

This sequence belongs to the class-I aminoacyl-tRNA synthetase family. In terms of assembly, monomer.

The protein localises to the cytoplasm. It carries out the reaction tRNA(Arg) + L-arginine + ATP = L-arginyl-tRNA(Arg) + AMP + diphosphate. This chain is Arginine--tRNA ligase, found in Burkholderia lata (strain ATCC 17760 / DSM 23089 / LMG 22485 / NCIMB 9086 / R18194 / 383).